The chain runs to 368 residues: Chorismate synthase (368 aa).

Positions 48 and 54 each coordinate NADP(+). FMN is bound by residues 131–133 (RSS), 243–244 (NA), Gly-292, 307–311 (KPTSS), and Arg-333.

The protein belongs to the chorismate synthase family. Homotetramer. FMNH2 serves as cofactor.

It catalyses the reaction 5-O-(1-carboxyvinyl)-3-phosphoshikimate = chorismate + phosphate. It participates in metabolic intermediate biosynthesis; chorismate biosynthesis; chorismate from D-erythrose 4-phosphate and phosphoenolpyruvate: step 7/7. Functionally, catalyzes the anti-1,4-elimination of the C-3 phosphate and the C-6 proR hydrogen from 5-enolpyruvylshikimate-3-phosphate (EPSP) to yield chorismate, which is the branch point compound that serves as the starting substrate for the three terminal pathways of aromatic amino acid biosynthesis. This reaction introduces a second double bond into the aromatic ring system. The protein is Chorismate synthase of Nitrobacter winogradskyi (strain ATCC 25391 / DSM 10237 / CIP 104748 / NCIMB 11846 / Nb-255).